Consider the following 244-residue polypeptide: Tegument protein UL51 (244 aa).

Residue Cys-9 is the site of S-palmitoyl cysteine; by host attachment. A disordered region spans residues 175-244 (TAGLGATEAP…SSTEAPLLLA (70 aa)). The segment covering 210-220 (RPGPVPPADPT) has biased composition (pro residues).

Belongs to the herpesviridae UL51 family. In terms of assembly, oligomerizes. Interacts with UL7; this interaction mediates UL7 incorporation to virions. In terms of processing, phosphorylated. Post-translationally, palmitoylation is necessary for Golgi localization.

Its subcellular location is the virion tegument. It localises to the host cytoplasm. It is found in the host Golgi apparatus. Plays several roles during the time course of infection, including egress of virus particles from the perinuclear space and secondary envelopment of cytoplasmic capsids that bud into specific trans-Golgi network (TGN)-derived membranes. The polypeptide is Tegument protein UL51 (Human herpesvirus 2 (strain HG52) (HHV-2)).